The primary structure comprises 571 residues: L-erythrulose 1-kinase (571 aa).

The DhaK domain occupies 7–331 (SPDDFADEAV…WTAPVETPAY (325 aa)). The Tele-hemiaminal-histidine intermediate role is filled by His217. Residues 367–567 (RNIVAVLETF…FAMLMKALGE (201 aa)) form the DhaL domain. Residues 396-402 (DGDHGQG), 442-443 (TS), Gly484, Arg539, and 552-554 (DPG) contribute to the ATP site.

It carries out the reaction L-erythrulose + ATP = L-erythrulose 1-phosphate + ADP + H(+). The protein operates within carbohydrate metabolism; L-threitol degradation. Its function is as follows. Kinase that has a preference for L-erythrulose, producing L-erythrulose-1P. Involved in the degradation pathway of L-threitol, that allows M.smegmatis to grow on this compound as the sole carbon source. Is also able to phosphorylate D-erythrulose and dihydroxyacetone in vitro. The polypeptide is L-erythrulose 1-kinase (Mycolicibacterium smegmatis (strain ATCC 700084 / mc(2)155) (Mycobacterium smegmatis)).